The chain runs to 352 residues: MMLFFTNMIVDGNYTVYEDANLAIYIPPGSDFDYIFTKNGQFILQIIAQGIGVIFQQTVNYTGPGLYKFQVSSGGVITQITPITIDIIIGNNIVIYEFQGIIIPGDQASTMGLTVNEVSYPGQGLFIVQGYPWYMYNPNYPVVFAPIGYTGLFMGIDNVVMERRTVSPTNMFLQPDGKVPYAYQLTITIQNANAQQIIQAFNQAIEFAAGMGAVAYEITSNNQITFYIIFISPTSWWVVALVFVVALALLAAAVFVDKLTKGVAMDMQAQAISNAYNANTQAFQQCISSCYQQTSGRTQCINNCYANYVKVLTMLGAQFGSLNQVLSQPTLSFSGQTNVSVQTNWATVAALR.

This is an uncharacterized protein from Thermoproteus tenax (TTV1).